Here is a 298-residue protein sequence, read N- to C-terminus: uncharacterized protein (298 aa).

Belongs to the glycosyltransferase 2 family.

This is an uncharacterized protein from Mycoplasma genitalium (strain ATCC 33530 / DSM 19775 / NCTC 10195 / G37) (Mycoplasmoides genitalium).